The primary structure comprises 1648 residues: Homeostatic regulator of DAG (1648 aa).

A DMAP1-binding domain is found at 5-101 (IPPTLPLDLQ…YRVTTINSTS (97 aa)). Residues Asn-28, Asn-71, and Asn-98 are each glycosylated (N-linked (GlcNAc...) asparagine). Disordered regions lie at residues 52–73 (PYTP…RNTS) and 96–130 (TINS…ENGS). Residues 60–71 (NSRKSKHLHRRN) show a composition bias toward basic residues. Composition is skewed to polar residues over residues 96–105 (TINSTSANNT) and 113–128 (YTAS…SDEN). Position 99 is a phosphoserine (Ser-99). 3 N-linked (GlcNAc...) asparagine glycosylation sites follow: Asn-128, Asn-151, and Asn-209. The tract at residues 158–893 (AMTDSLPLIL…VEKKFLNNDL (736 aa)) is fatty acyl-AMP ligase-like domain 1. A helical membrane pass occupies residues 228 to 248 (VIEFTIALLGCFISGMAAVPV). N-linked (GlcNAc...) asparagine glycosylation is found at Asn-288, Asn-328, Asn-575, Asn-644, and Asn-730. Ser-751 carries the post-translational modification Phosphoserine. 4 N-linked (GlcNAc...) asparagine glycosylation sites follow: Asn-881, Asn-917, Asn-995, and Asn-1009. Positions 950–1648 (VKPKLALQCS…LLSDYEKDNI (699 aa)) are fatty acyl-AMP ligase-like domain 2. A helical transmembrane segment spans residues 1061 to 1081 (YVAMIMACLYCNLLVIPLPSV). The N-linked (GlcNAc...) asparagine glycan is linked to Asn-1198. A helical membrane pass occupies residues 1224-1244 (GLGFMFSCLLGIYTGASTCLF). Residues Asn-1301, Asn-1302, Asn-1447, Asn-1472, Asn-1488, Asn-1565, Asn-1597, and Asn-1634 are each glycosylated (N-linked (GlcNAc...) asparagine).

Its subcellular location is the vacuole membrane. The protein resides in the mitochondrion membrane. In terms of biological role, homeostatic regulator of a chemically distinct subset of diacylglycerols (DAGs) with C36 chain length that prevents the toxic accumulation of these specific DAGs in the logarithmic growth phase, which otherwise leads to endoplasmic reticulum stress. Maintains the basal level of DAG subspecies by directly facilitating DAG to triacylglycerol (TAG) conversion process, possibly via adenylation activity of its FLD domains. Does not affect the abundant DAG species (representing over 90% of total DAG pool), comprised of C32 and C34 chain lengths. Required for vacuole fusion-mediated osmoadaptation. The sequence is that of Homeostatic regulator of DAG from Saccharomyces cerevisiae (strain ATCC 204508 / S288c) (Baker's yeast).